Consider the following 507-residue polypeptide: Histidine ammonia-lyase (507 aa).

Residues 141–143 constitute a cross-link (5-imidazolinone (Ala-Gly)); sequence ASG. S142 is subject to 2,3-didehydroalanine (Ser).

The protein belongs to the PAL/histidase family. Contains an active site 4-methylidene-imidazol-5-one (MIO), which is formed autocatalytically by cyclization and dehydration of residues Ala-Ser-Gly.

Its subcellular location is the cytoplasm. The enzyme catalyses L-histidine = trans-urocanate + NH4(+). It participates in amino-acid degradation; L-histidine degradation into L-glutamate; N-formimidoyl-L-glutamate from L-histidine: step 1/3. The sequence is that of Histidine ammonia-lyase from Burkholderia orbicola (strain MC0-3).